The sequence spans 671 residues: DNA ligase (671 aa).

NAD(+)-binding positions include 32–36, 81–82, and glutamate 113; these read DAEYD and SL. Catalysis depends on lysine 115, which acts as the N6-AMP-lysine intermediate. The NAD(+) site is built by arginine 136, glutamate 173, lysine 290, and lysine 314. Residues cysteine 408, cysteine 411, cysteine 426, and cysteine 432 each coordinate Zn(2+). Residues 593–671 enclose the BRCT domain; sequence EIDSPFAGKT…EAEMLRLLGS (79 aa).

The protein belongs to the NAD-dependent DNA ligase family. LigA subfamily. Requires Mg(2+) as cofactor. Mn(2+) is required as a cofactor.

It catalyses the reaction NAD(+) + (deoxyribonucleotide)n-3'-hydroxyl + 5'-phospho-(deoxyribonucleotide)m = (deoxyribonucleotide)n+m + AMP + beta-nicotinamide D-nucleotide.. Its function is as follows. DNA ligase that catalyzes the formation of phosphodiester linkages between 5'-phosphoryl and 3'-hydroxyl groups in double-stranded DNA using NAD as a coenzyme and as the energy source for the reaction. It is essential for DNA replication and repair of damaged DNA. The polypeptide is DNA ligase (Escherichia coli O157:H7).